Reading from the N-terminus, the 517-residue chain is Recombining binding protein suppressor of hairless-like protein (517 aa).

The segment covering 26-37 (EMQLQSEADRRS) has biased composition (basic and acidic residues). Positions 26-48 (EMQLQSEADRRSLPGTWTRSSPE) are disordered. DNA-binding stretches follow at residues 78–88 (QKSYGNEKRFF), 193–198 (SKPSQK), and 220–225 (RLRSQT). Positions 387–512 (LISTLELSGG…HQEFTRTNFH (126 aa)) constitute an IPT/TIG domain.

Belongs to the Su(H) family. Interacts weakly with EBNA2. Does not interact with any Notch proteins.

Its subcellular location is the nucleus. In terms of biological role, putative transcription factor, which cooperates with EBNA2 to activate transcription. The sequence is that of Recombining binding protein suppressor of hairless-like protein (RBPJL) from Homo sapiens (Human).